Here is a 706-residue protein sequence, read N- to C-terminus: Frizzled-6 (706 aa).

Positions methionine 1–glycine 18 are cleaved as a signal peptide. Residues histidine 19–threonine 132 form the FZ domain. The Extracellular segment spans residues histidine 19–phenylalanine 201. 5 disulfide bridges follow: cysteine 24–cysteine 85, cysteine 32–cysteine 78, cysteine 69–cysteine 106, cysteine 95–cysteine 129, and cysteine 99–cysteine 123. The N-linked (GlcNAc...) asparagine glycan is linked to asparagine 38. The chain crosses the membrane as a helical span at residues isoleucine 202–isoleucine 222. At aspartate 223–proline 233 the chain is on the cytoplasmic side. A helical transmembrane segment spans residues isoleucine 234–leucine 254. Over glycine 255–valine 284 the chain is Extracellular. Residues leucine 285–isoleucine 305 traverse the membrane as a helical segment. The Cytoplasmic portion of the chain corresponds to threonine 306–alanine 324. The chain crosses the membrane as a helical span at residues valine 325–methionine 345. Residues asparagine 346–phenylalanine 370 are Extracellular-facing. Asparagine 352 carries an N-linked (GlcNAc...) asparagine glycan. Residues valine 371–isoleucine 391 traverse the membrane as a helical segment. Over serine 392–arginine 416 the chain is Cytoplasmic. Residues isoleucine 417–tyrosine 437 traverse the membrane as a helical segment. Residues glutamate 438–leucine 473 are Extracellular-facing. A helical membrane pass occupies residues alanine 474 to valine 494. The Cytoplasmic segment spans residues glycine 495–threonine 706. The Lys-Thr-X-X-X-Trp motif, mediates interaction with the PDZ domain of Dvl family members signature appears at lysine 498–tryptophan 503. The disordered stretch occupies residues glutamate 588–threonine 706. Basic and acidic residues predominate over residues alanine 646–isoleucine 658. Phosphoserine is present on serine 653. Polar residues predominate over residues glycine 662–proline 672. Residues serine 673–serine 685 show a composition bias toward low complexity. Residues valine 694–threonine 706 show a composition bias toward basic and acidic residues.

This sequence belongs to the G-protein coupled receptor Fz/Smo family. Interacts with LMBR1L. In terms of processing, ubiquitinated by ZNRF3, leading to its degradation by the proteasome. Detected in adult heart, brain, placenta, lung, liver, skeletal muscle, kidney, pancreas, thymus, prostate, testis, ovary, small intestine and colon. In the fetus, expressed in brain, lung, liver and kidney.

The protein localises to the membrane. The protein resides in the cell membrane. Its subcellular location is the cell surface. It is found in the apical cell membrane. It localises to the cytoplasmic vesicle membrane. The protein localises to the endoplasmic reticulum membrane. Its function is as follows. Receptor for Wnt proteins. Most of frizzled receptors are coupled to the beta-catenin canonical signaling pathway, which leads to the activation of disheveled proteins, inhibition of GSK-3 kinase, nuclear accumulation of beta-catenin and activation of Wnt target genes. A second signaling pathway involving PKC and calcium fluxes has been seen for some family members, but it is not yet clear if it represents a distinct pathway or if it can be integrated in the canonical pathway, as PKC seems to be required for Wnt-mediated inactivation of GSK-3 kinase. Both pathways seem to involve interactions with G-proteins. May be involved in transduction and intercellular transmission of polarity information during tissue morphogenesis and/or in differentiated tissues. Together with FZD3, is involved in the neural tube closure and plays a role in the regulation of the establishment of planar cell polarity (PCP), particularly in the orientation of asymmetric bundles of stereocilia on the apical faces of a subset of auditory and vestibular sensory cells located in the inner ear. The protein is Frizzled-6 (FZD6) of Homo sapiens (Human).